Consider the following 192-residue polypeptide: dTDP-4-amino-4,6-dideoxy-D-glucose acyltransferase (192 aa).

It belongs to the transferase hexapeptide repeat family.

The catalysed reaction is dTDP-4-amino-4,6-dideoxy-alpha-D-glucose + acetyl-CoA = dTDP-4-acetamido-4,6-dideoxy-alpha-D-glucose + CoA + H(+). It participates in bacterial outer membrane biogenesis; lipopolysaccharide biosynthesis. Catalyzes the conversion of dTDP-4-amino-4,6-dideoxy-D-glucose (dTDP-D-Qui4N) to dTDP-4-acetamido-4,6-dideoxy-D-glucose (dTDP-D-Qui4NAc). The polypeptide is dTDP-4-amino-4,6-dideoxy-D-glucose acyltransferase (vioB) (Escherichia coli).